The following is a 331-amino-acid chain: Glycerophosphodiester phosphodiesterase 1 (331 aa).

The Cytoplasmic portion of the chain corresponds to 1 to 3; sequence MWL. The chain crosses the membrane as a helical span at residues 4 to 24; that stretch reads WEDQGGLLGPFSFLLLVLLLV. Over 25–247 the chain is Lumenal; sequence TRSPVNACLL…KPRYDTFWKH (223 aa). One can recognise a GP-PDE domain in the interval 65–331; sequence ISAIAHRGGS…SMVEDCEPHF (267 aa). Positions 97 and 99 each coordinate Mg(2+). The N-linked (GlcNAc...) asparagine glycan is linked to N168. A Mg(2+)-binding site is contributed by D174. The N-linked (GlcNAc...) asparagine glycan is linked to N198. Residues 248–268 form a helical membrane-spanning segment; sequence FIFVMMDILLDWSMHNILWYL. Residues 269 to 331 lie on the Cytoplasmic side of the membrane; the sequence is CGISAFLMQK…SMVEDCEPHF (63 aa).

This sequence belongs to the glycerophosphoryl diester phosphodiesterase family. Interacts with PRAF2. Interacts with RGS16. The cofactor is Mg(2+). In terms of processing, N-glycosylated. As to expression, widely expressed.

Its subcellular location is the cell membrane. It is found in the cytoplasmic vesicle membrane. It catalyses the reaction sn-glycero-3-phospho-1D-myo-inositol + H2O = myo-inositol + sn-glycerol 3-phosphate + H(+). The enzyme catalyses 1-O-(1Z-octadecenyl)-sn-glycero-3-phospho-(N-5Z,8Z,11Z,14Z-eicosatetraenoyl)-ethanolamine + H2O = 1-O-(1Z-octadecenyl)-sn-glycero-3-phosphate + N-(5Z,8Z,11Z,14Z-eicosatetraenoyl)-ethanolamine + H(+). The catalysed reaction is 1-O-(1Z-octadecenyl)-sn-glycero-3-phospho-(N-9Z-octadecenoyl)-ethanolamine + H2O = 1-O-(1Z-octadecenyl)-sn-glycero-3-phosphate + N-(9Z-octadecenoyl) ethanolamine + H(+). It carries out the reaction 1-O-(1Z-octadecenyl)-sn-glycero-3-phospho-N-hexadecanoyl-ethanolamine + H2O = 1-O-(1Z-octadecenyl)-sn-glycero-3-phosphate + N-hexadecanoylethanolamine + H(+). It catalyses the reaction N-(4Z,7Z,10Z,13Z,16Z,19Z)-docosahexaenoyl-sn-glycero-3-phosphoethanolamine + H2O = N-(4Z,7Z,10Z,13Z,16Z,19Z)-docosahexaenoyl ethanolamine + sn-glycerol 3-phosphate + H(+). The enzyme catalyses N-eicosanoyl-sn-glycero-3-phosphoethanolamine + H2O = N-eicosanoyl ethanolamine + sn-glycerol 3-phosphate + H(+). The catalysed reaction is N-hexadecanoyl-sn-glycero-3-phosphoethanolamine + H2O = N-hexadecanoylethanolamine + sn-glycerol 3-phosphate + H(+). It carries out the reaction N-(9Z-octadecenoyl)-sn-glycero-3-phosphoethanolamine + H2O = N-(9Z-octadecenoyl) ethanolamine + sn-glycerol 3-phosphate + H(+). It catalyses the reaction N-(5Z,8Z,11Z,14Z-eicosatetraenoyl)-sn-glycero-3-phosphoethanolamine + H2O = N-(5Z,8Z,11Z,14Z-eicosatetraenoyl)-ethanolamine + sn-glycerol 3-phosphate + H(+). With respect to regulation, inhibited by EDTA, calcium chloride, and zinc chloride. Enhanced by magnesium chloride. Glycerophosphodiester phosphodiesterase activity can be modulated by G-protein signaling pathways. In terms of biological role, hydrolyzes the phosphodiester bond of glycerophosphodiesters such as glycerophosphoinositol (GroPIns) and glycerophosphoethanolamine (GroPEth), to yield a glycerol phosphate and an alcohol. Hydrolyzes glycerophospho-N-acylethanolamines to N-acylethanolamines in the brain and participates in bioactive N-acylethanolamine biosynthesis such as anandamide (an endocannabinoid), N-palmitoylethanolamine (an anti-inflammatory), and N-oleoylethanolamine (an anorexic). In addition, has a lysophospholipase D activity by hydrolyzing N-acyl-lysoplasmenylethanolamine (N-acyl-lysoPlsEt) to N-acylethanolamine. However lysophospholipase D activity is lower than glycerophosphodiester phosphodiesterase activity. Has little or no activity towards glycerophosphocholine. The sequence is that of Glycerophosphodiester phosphodiesterase 1 from Homo sapiens (Human).